Reading from the N-terminus, the 280-residue chain is Cyanocobalamin reductase / alkylcobalamin dealkylase (280 aa).

Substrate contacts are provided by residues Asp-104, 115–118 (ILAQ), 129–131 (YYQ), Cys-149, and Ile-160. A phosphoserine mark is found at Ser-245, Ser-247, Ser-273, and Ser-277. The disordered stretch occupies residues 256–280 (LSKKPQNPRRGWLSPTVSPPISPGP).

It belongs to the MMACHC family. In terms of assembly, monomer in the absence of bound substrate. Homodimer; dimerization is triggered by binding to FMN or adenosylcobalamin. Interacts with LMBRD1 and ABCD4; the interaction ensures the transport of cobalamin from the lysosome to the cytoplasm. Forms a multiprotein complex with MMADHC, MTR and MTRR; the interaction with MTR could modulate MMACHC-dependent processing of cobalamin. Heterodimer with MMADHC; the interaction might play a role in the regulation of the balance between AdoCbl and MeCbl synthesis. The cofactor is FAD. Requires FMN as cofactor.

It localises to the cytoplasm. Its subcellular location is the cytosol. The catalysed reaction is 2 cob(II)alamin-[cyanocobalamin reductase] + 2 hydrogen cyanide + NADP(+) = 2 cyanocob(III)alamin + 2 apo-[cyanocobalamin reductase] + NADPH + H(+). It catalyses the reaction apo-[alkylcobalamin reductase] + an R-cob(III)alamin + glutathione = cob(I)alamin-[alkylcobalamin reductase] + an S-substituted glutathione + H(+). It carries out the reaction apo-[alkylcobalamin reductase] + methylcob(III)alamin + glutathione = S-methyl glutathione + cob(I)alamin-[alkylcobalamin reductase] + H(+). The enzyme catalyses apo-[alkylcobalamin reductase] + adenosylcob(III)alamin + glutathione = S-adenosylglutathione + cob(I)alamin-[alkylcobalamin reductase] + H(+). Functionally, cobalamin (vitamin B12) cytosolic chaperone that catalyzes the reductive decyanation of cyanocob(III)alamin (cyanocobalamin, CNCbl) to yield cob(II)alamin and cyanide, using FAD or FMN as cofactors and NADPH as cosubstrate. Cyanocobalamin constitutes the inactive form of vitamin B12 introduced from the diet, and is converted into the active cofactors methylcobalamin (MeCbl) involved in methionine biosynthesis, and 5'-deoxyadenosylcobalamin (AdoCbl) involved in the TCA cycle. Forms a complex with the lysosomal transporter ABCD4 and its chaperone LMBRD1, to transport cobalamin across the lysosomal membrane into the cytosol. The processing of cobalamin in the cytosol occurs in a multiprotein complex composed of at least MMACHC, MMADHC, MTRR (methionine synthase reductase) and MTR (methionine synthase) which may contribute to shuttle safely and efficiently cobalamin towards MTR in order to produce methionine. Also acts as a glutathione transferase by catalyzing the dealkylation of the alkylcob(III)alamins MeCbl and AdoCbl, using the thiolate of glutathione for nucleophilic displacement to generate cob(I)alamin and the corresponding glutathione thioether. The conversion of incoming MeCbl or AdoCbl into a common intermediate cob(I)alamin is necessary to meet the cellular needs for both cofactors. Cysteine and homocysteine cannot substitute for glutathione in this reaction. The protein is Cyanocobalamin reductase / alkylcobalamin dealkylase (MMACHC) of Bos taurus (Bovine).